Here is a 176-residue protein sequence, read N- to C-terminus: Sigma intracellular receptor 2 (176 aa).

At 1–9 the chain is on the cytoplasmic side; sequence MGAPATRRC. The helical transmembrane segment at 10–30 threads the bilayer; sequence VEWLLGLYFLSHIPITLFMDL. Residues 10–158 enclose the EXPERA domain; the sequence is VEWLLGLYFL…PYLLIPFILL (149 aa). The Lumenal portion of the chain corresponds to 31-68; sequence QAVLPRELYPVEFRNLLKWYAKEFKDPLLQEPPAWFKS. Residues 69 to 89 form a helical membrane-spanning segment; that stretch reads FLFCELVFQLPFFPIATYAFL. V75 and Q77 together coordinate cholesterol. Residues 90-99 lie on the Cytoplasmic side of the membrane; it reads KGSCKWIRTP. Residues 100-120 form a helical membrane-spanning segment; that stretch reads AIIYSVHTMTTLIPILSTFLF. Residues 108 to 176 form a required for interaction with Hst1/HTN1 region; it reads MTTLIPILST…YKYEEKRKKK (69 aa). Residues 121–140 are Lumenal-facing; sequence EDFSKASGFKGQRPETLHER. Residues 141 to 161 traverse the membrane as a helical segment; sequence LTLVSVYAPYLLIPFILLIFM. Residues 162–176 lie on the Cytoplasmic side of the membrane; that stretch reads LRSPYYKYEEKRKKK. An ER retention motif motif is present at residues 172 to 176; it reads KRKKK.

Belongs to the TMEM97/sigma-2 receptor family. In terms of assembly, homodimer. Interacts with NPC1; the interaction impairs NPC1-mediated cholesterol transport. Interacts with PGRMC1 and LDLR; the interaction increases LDL internalization. Interacts with histatin 1/HTN1; the interaction induces HTN1-stimulating wound healing. Interacts with TSPO. Forms a complex with TSPO and PGRMC1; the interaction occurs in MIA PaCa-2 cells but not in MCF7 cells. In terms of tissue distribution, widely expressed in normal tissues. Expressed in pancreatic, renal, breast, colon, ovarian surface epithelial (OSE) cells. Highly expressed in various proliferating cancer cells.

The protein localises to the rough endoplasmic reticulum membrane. Its subcellular location is the nucleus membrane. Sigma-2 receptor which contributes to ameliorate dysfunctional cellular processes and slow degenerative progression by regulating cell functions including cholesterol biosynthesis/trafficking, membrane trafficking, autophagy, lipid membrane-bound protein trafficking, and receptor stabilization at the cell surface. Forms a ternary complex with PGRMC1 receptor and low density lipoprotein receptor/LDLR at the plasma membrane, which increases LDLR-mediated LDL cholesterol internalization. Decreases lysosomal sterol transporter NPC1 availability to the cell, probably through NPC1-binding, hence controlling lipid transport, including cholesterol and LBPA, outside of late endosome/lysosome. Binds regio- and stereoselective ligand 20(S)-hydroxycholesterol (20(S)-OHC) which enhances TMEM97-NPC1 interaction and decreases TMEM97-PGRMC1 and TMEM97-TSPO interactions, thereby linking OHC binding to cholesterol homeostasis. Also able to bind cholesterol. Binds histatin 1 (Hst 1)/HN1 salivary peptide at the ER membrane, which is critical for increasing mitochondria-ER contacts and stimulating Hst1 wound healing properties. May alter the activity of some cytochrome P450 proteins. Although shows homologies with sterol isomerases (EXPERA domain), not able to catalyze sterol isomerization. However, may act as sensors of these molecules. Acts as a quality control factor in the ER, promoting the proteolytic degradation of nonproductive and extramitochondrial precursor proteins in the ER membrane thus removing them from the ER surface. The polypeptide is Sigma intracellular receptor 2 (Homo sapiens (Human)).